The following is a 533-amino-acid chain: Probable protein kinase UbiB (533 aa).

A helical membrane pass occupies residues 24 to 44; the sequence is LILELPMLPWWLRLLGATLPW. The Protein kinase domain occupies 126–494; sequence RFEREPLASA…WKGSRHDWLG (369 aa). ATP is bound by residues 132–140 and Lys-154; that span reads LASASVAQV. Catalysis depends on Asp-289, which acts as the Proton acceptor. Residues 510-530 form a helical membrane-spanning segment; it reads LGQQLEAWPAWVMLAGGVFLI.

Belongs to the ABC1 family. UbiB subfamily.

The protein resides in the cell inner membrane. It functions in the pathway cofactor biosynthesis; ubiquinone biosynthesis [regulation]. Is probably a protein kinase regulator of UbiI activity which is involved in aerobic coenzyme Q (ubiquinone) biosynthesis. The polypeptide is Probable protein kinase UbiB (Pseudomonas aeruginosa (strain LESB58)).